The chain runs to 386 residues: Acetylornithine aminotransferase (386 aa).

Residues 94 to 95 (GT) and Phe-121 contribute to the pyridoxal 5'-phosphate site. Residue Arg-124 participates in N(2)-acetyl-L-ornithine binding. 206–209 (DEVQ) is a pyridoxal 5'-phosphate binding site. Lys-235 is subject to N6-(pyridoxal phosphate)lysine. N(2)-acetyl-L-ornithine is bound at residue Ser-263. A pyridoxal 5'-phosphate-binding site is contributed by Thr-264.

It belongs to the class-III pyridoxal-phosphate-dependent aminotransferase family. ArgD subfamily. In terms of assembly, homodimer. The cofactor is pyridoxal 5'-phosphate.

The protein resides in the cytoplasm. The enzyme catalyses N(2)-acetyl-L-ornithine + 2-oxoglutarate = N-acetyl-L-glutamate 5-semialdehyde + L-glutamate. It participates in amino-acid biosynthesis; L-arginine biosynthesis; N(2)-acetyl-L-ornithine from L-glutamate: step 4/4. In Listeria monocytogenes serovar 1/2a (strain ATCC BAA-679 / EGD-e), this protein is Acetylornithine aminotransferase.